The following is a 97-amino-acid chain: Large ribosomal subunit protein bL28 (97 aa).

The protein belongs to the bacterial ribosomal protein bL28 family.

The polypeptide is Large ribosomal subunit protein bL28 (Nitrobacter winogradskyi (strain ATCC 25391 / DSM 10237 / CIP 104748 / NCIMB 11846 / Nb-255)).